The primary structure comprises 901 residues: Valine--tRNA ligase (901 aa).

A disordered region spans residues 1-37; it reads MLPGCYTHRLNMSDTQDPPQDESTTDESADALDGEYD. Residues 19–35 are compositionally biased toward acidic residues; sequence PQDESTTDESADALDGE. The short motif at 72–82 is the 'HIGH' region element; the sequence is PTVSGNLHMGH. The 'KMSKS' region motif lies at 572–576; it reads AMSKS. Lysine 575 serves as a coordination point for ATP.

This sequence belongs to the class-I aminoacyl-tRNA synthetase family. ValS type 2 subfamily.

It is found in the cytoplasm. The catalysed reaction is tRNA(Val) + L-valine + ATP = L-valyl-tRNA(Val) + AMP + diphosphate. Functionally, catalyzes the attachment of valine to tRNA(Val). As ValRS can inadvertently accommodate and process structurally similar amino acids such as threonine, to avoid such errors, it has a 'posttransfer' editing activity that hydrolyzes mischarged Thr-tRNA(Val) in a tRNA-dependent manner. This Haloarcula marismortui (strain ATCC 43049 / DSM 3752 / JCM 8966 / VKM B-1809) (Halobacterium marismortui) protein is Valine--tRNA ligase.